The following is a 188-amino-acid chain: uncharacterized protein (188 aa).

Residues 57-80 are disordered; sequence NDDVAPVAEGPKQERRSPSRNIGR.

This sequence belongs to the transposase 25 family.

This is an uncharacterized protein from Sinorhizobium fredii (strain NBRC 101917 / NGR234).